We begin with the raw amino-acid sequence, 152 residues long: MKKRLFVLSLILLVALDQLSKFWIVSHIALGEVKPFIPGIVSLTYLQNNGAAFSILQDQQWFFVVITVLVIGYAIYYLATHPHLNIWKQLALLLIISGGIGNFIDRLRLAYVIDMIHLDFMDFAIFNVADSYLTVGVILLVICLWKEEDYGN.

The next 3 membrane-spanning stretches (helical) occupy residues 5–25 (LFVLSLILLVALDQLSKFWIV), 61–81 (WFFVVITVLVIGYAIYYLATH), and 84–104 (LNIWKQLALLLIISGGIGNFI). Residues D114 and D130 contribute to the active site. A helical membrane pass occupies residues 125 to 145 (IFNVADSYLTVGVILLVICLW).

Belongs to the peptidase A8 family.

The protein localises to the cell membrane. The catalysed reaction is Release of signal peptides from bacterial membrane prolipoproteins. Hydrolyzes -Xaa-Yaa-Zaa-|-(S,diacylglyceryl)Cys-, in which Xaa is hydrophobic (preferably Leu), and Yaa (Ala or Ser) and Zaa (Gly or Ala) have small, neutral side chains.. It participates in protein modification; lipoprotein biosynthesis (signal peptide cleavage). This protein specifically catalyzes the removal of signal peptides from prolipoproteins. The polypeptide is Lipoprotein signal peptidase (Streptococcus pyogenes serotype M2 (strain MGAS10270)).